Consider the following 491-residue polypeptide: Glutamyl-tRNA(Gln) amidotransferase subunit A (491 aa).

Active-site charge relay system residues include lysine 79 and serine 158. The active-site Acyl-ester intermediate is serine 182.

This sequence belongs to the amidase family. GatA subfamily. In terms of assembly, heterotrimer of A, B and C subunits.

The catalysed reaction is L-glutamyl-tRNA(Gln) + L-glutamine + ATP + H2O = L-glutaminyl-tRNA(Gln) + L-glutamate + ADP + phosphate + H(+). In terms of biological role, allows the formation of correctly charged Gln-tRNA(Gln) through the transamidation of misacylated Glu-tRNA(Gln) in organisms which lack glutaminyl-tRNA synthetase. The reaction takes place in the presence of glutamine and ATP through an activated gamma-phospho-Glu-tRNA(Gln). The protein is Glutamyl-tRNA(Gln) amidotransferase subunit A of Maricaulis maris (strain MCS10) (Caulobacter maris).